The sequence spans 177 residues: Parathyroid hormone-related protein (177 aa).

A signal peptide spans 1–24 (MQRRLVQQWSVAVFLLSYAVPSCG). Residues 25–34 (RSVEGLSRRL) constitute a propeptide that is removed on maturation. Residues 57–68 (RFFLHHLIAEIH) are important for receptor binding. Residues 74 to 177 (ATSEVSPNSK…TSLELDSRRH (104 aa)) are disordered. The segment covering 76–90 (SEVSPNSKPSPNTKN) has biased composition (polar residues). Residues 108–129 (TNKVETYKEQPLKTPGKKKKGK) carry the Nuclear localization signal motif. A compositionally biased stretch (basic and acidic residues) spans 109 to 118 (NKVETYKEQP). Over residues 122 to 132 (PGKKKKGKPGK) the composition is skewed to basic residues.

This sequence belongs to the parathyroid hormone family. Interacts with PTH1R (via N-terminal extracellular domain). There are 3 principal secretory forms, called PTHrP[1-36], PTHrP[38-94], and osteostatin (PTHrP[107-139]) arising from endoproteolytic cleavage of the initial translation product. Each of these secretory forms is believed to have one or more of its own receptors that mediates the normal paracrine, autocrine and endocrine actions. Ubiquitous. Also expressed in the mammary gland.

It is found in the secreted. The protein localises to the cytoplasm. It localises to the nucleus. Neuroendocrine peptide which is a critical regulator of cellular and organ growth, development, migration, differentiation and survival and of epithelial calcium ion transport. Acts by binding to its receptor, PTH1R, activating G protein-coupled receptor signaling. Regulates endochondral bone development and epithelial-mesenchymal interactions during the formation of the mammary glands and teeth. Required for skeletal homeostasis. Promotes mammary mesenchyme differentiation and bud outgrowth by modulating mesenchymal cell responsiveness to BMPs. Up-regulates BMPR1A expression in the mammary mesenchyme and this increases the sensitivity of these cells to BMPs and allows them to respond to BMP4 in a paracrine and/or autocrine fashion. BMP4 signaling in the mesenchyme, in turn, triggers epithelial outgrowth and augments MSX2 expression, which causes the mammary mesenchyme to inhibit hair follicle formation within the nipple sheath. Promotes colon cancer cell migration and invasion in an integrin alpha-6/beta-1-dependent manner through activation of Rac1. Functionally, potent inhibitor of osteoclastic bone resorption. This is Parathyroid hormone-related protein from Homo sapiens (Human).